Consider the following 279-residue polypeptide: Putative cysteine-rich repeat secretory protein 22 (279 aa).

The signal sequence occupies residues 1 to 31 (MSSSSASKLLGSVLVFAMISVQIVFIHCVMS). 2 consecutive Gnk2-homologous domains span residues 44–146 (YLHH…PINS) and 152–276 (YEYN…LYRF).

This sequence belongs to the cysteine-rich repeat secretory protein family.

It localises to the secreted. The sequence is that of Putative cysteine-rich repeat secretory protein 22 (CRRSP22) from Arabidopsis thaliana (Mouse-ear cress).